A 178-amino-acid polypeptide reads, in one-letter code: Large ribosomal subunit protein uL6 (178 aa).

This sequence belongs to the universal ribosomal protein uL6 family. Part of the 50S ribosomal subunit.

Functionally, this protein binds to the 23S rRNA, and is important in its secondary structure. It is located near the subunit interface in the base of the L7/L12 stalk, and near the tRNA binding site of the peptidyltransferase center. The protein is Large ribosomal subunit protein uL6 of Campylobacter curvus (strain 525.92).